The chain runs to 153 residues: Riboflavin synthase (153 aa).

This sequence belongs to the DMRL synthase family. Homooligomer. The cofactor is Mg(2+).

The enzyme catalyses 2 6,7-dimethyl-8-(1-D-ribityl)lumazine + H(+) = 5-amino-6-(D-ribitylamino)uracil + riboflavin. It functions in the pathway cofactor biosynthesis; riboflavin biosynthesis; riboflavin from 2-hydroxy-3-oxobutyl phosphate and 5-amino-6-(D-ribitylamino)uracil: step 2/2. Its activity is regulated as follows. Inhibited by EDTA. In Methanothermobacter thermautotrophicus (strain ATCC 29096 / DSM 1053 / JCM 10044 / NBRC 100330 / Delta H) (Methanobacterium thermoautotrophicum), this protein is Riboflavin synthase (ribC).